The following is a 110-amino-acid chain: UPF0145 protein LMOf2365_0219 (110 aa).

Belongs to the UPF0145 family.

This Listeria monocytogenes serotype 4b (strain F2365) protein is UPF0145 protein LMOf2365_0219.